A 165-amino-acid polypeptide reads, in one-letter code: Ubiquitin-fold modifier-conjugating enzyme 1 (165 aa).

Catalysis depends on C116, which acts as the Glycyl thioester intermediate.

The protein belongs to the ubiquitin-conjugating enzyme family. UFC1 subfamily.

Its function is as follows. E2-like enzyme which forms an intermediate with UFM1 via a thioester linkage. The protein is Ubiquitin-fold modifier-conjugating enzyme 1 of Drosophila mojavensis (Fruit fly).